Here is a 1581-residue protein sequence, read N- to C-terminus: ATP-binding cassette sub-family C member 8 (1581 aa).

At 1 to 30 (MPLAFCGSENHSAAYRVDQGVLNNGCFVDA) the chain is on the extracellular side. An intrachain disulfide couples Cys6 to Cys26. Asn10 is a glycosylation site (N-linked (GlcNAc...) asparagine). The helical transmembrane segment at 31–47 (LNVVPHVFLLFITFPIL) threads the bilayer. The Cytoplasmic portion of the chain corresponds to 48 to 72 (FIGWGSQSSKVHIHHSTWLHFPGHN). Residues 73–89 (LRWILTFMLLFVLVCEI) form a helical membrane-spanning segment. Topologically, residues 90–106 (AEGILSDGVTESHHLHL) are extracellular. Residues 107-123 (YMPAGMAFMAAVTSVVY) traverse the membrane as a helical segment. The Cytoplasmic portion of the chain corresponds to 124–136 (YHNIETSNFPKLL). The helical transmembrane segment at 137–153 (IALLVYWTLAFITKTIK) threads the bilayer. The Extracellular portion of the chain corresponds to 154–169 (FVKFLDHAIGFSQLRF). A helical transmembrane segment spans residues 170-186 (CLTGLLVILYGMLLLVE). Topologically, residues 187–303 (VNVIRVRRYI…AFGRRLVLSS (117 aa)) are cytoplasmic. An ABC transmembrane type-1 1 domain is found at 299–602 (LVLSSTFRIL…LSSVVRSTVK (304 aa)). The helical transmembrane segment at 304–319 (TFRILADLLGFAGPLC) threads the bilayer. Over 320 to 356 (IFGIVDHLGKENDVFQPKTQFLGVYFVSSQEFLANAY) the chain is Extracellular. A helical transmembrane segment spans residues 357–372 (VLAVLLFLALLLQRTF). The Cytoplasmic portion of the chain corresponds to 373–438 (LQASYYVAIE…MWFFFLCPNL (66 aa)). The chain crosses the membrane as a helical span at residues 439 to 454 (WAMPVQIIVGVILLYY). The Extracellular portion of the chain corresponds to 455–460 (ILGVSA). Residues 461–473 (LIGAAVIILLAPV) form a helical membrane-spanning segment. The Cytoplasmic segment spans residues 474 to 541 (QYFVATKLSQ…SLRAFAIYTS (68 aa)). Residues 542 to 557 (ISIFMNTAIPIAAVLI) traverse the membrane as a helical segment. Over 558-576 (TFVGHVSFFKEADFSPSVA) the chain is Extracellular. Residues 577-592 (FASLSLFHILVTPLFL) form a helical membrane-spanning segment. At 593–1012 (LSSVVRSTVK…YLSSAGILLL (420 aa)) the chain is on the cytoplasmic side. An ABC transporter 1 domain is found at 679–929 (VQIMGGYFTW…ECQLFEHWKT (251 aa)). ATP contacts are provided by Trp688, Gly716, Ser720, and Ser721. Ser720 contributes to the Mg(2+) binding site. Residue Gln774 participates in Mg(2+) binding. The span at 935 to 949 (DQELEKETVTERKAT) shows a compositional bias: basic and acidic residues. The tract at residues 935 to 987 (DQELEKETVTERKATEPPQGLSRAMSSRDGLLQDEEEEEEEAAESEEDDNLSS) is disordered. Residues 966 to 984 (LQDEEEEEEEAAESEEDDN) are compositionally biased toward acidic residues. Positions 1012–1306 (LSLLVFSQLL…MVRNLADMEL (295 aa)) constitute an ABC transmembrane type-1 2 domain. A helical membrane pass occupies residues 1013–1030 (SLLVFSQLLKHMVLVAID). Residues 1031–1066 (YWLAKWTDSALTLTPAARNCSLSQECTLDQTVYAMV) lie on the Extracellular side of the membrane. The N-linked (GlcNAc...) asparagine glycan is linked to Asn1049. A helical transmembrane segment spans residues 1067-1083 (FTVLCSLGIVLCLVTSV). Residues 1084–1142 (TVEWTGLKVAKRLHRSLLNRIILAPMRFFETTPLGSILNRFSSDCNTIDQHIPSTLECL) are Cytoplasmic-facing. Residues 1143-1160 (SRSTLLCVSALAVISYVT) traverse the membrane as a helical segment. Pro1161 is a topological domain (extracellular). The helical transmembrane segment at 1162–1174 (VFLVALLPLAIVC) threads the bilayer. The Cytoplasmic segment spans residues 1175–1248 (YFIQKYFRVA…FLTAANRWLE (74 aa)). Residues 1249–1264 (VRMEYIGACVVLIAAV) traverse the membrane as a helical segment. The Extracellular portion of the chain corresponds to 1265–1280 (TSISNSLHRELSAGLV). Residues 1281–1296 (GLGLTYALMVSNYLNW) traverse the membrane as a helical segment. The Cytoplasmic segment spans residues 1297–1581 (MVRNLADMEL…VFASFVRADK (285 aa)). Positions 1344-1578 (IQIQNLSVRY…KDSVFASFVR (235 aa)) constitute an ABC transporter 2 domain. Positions 1380, 1381, 1383, 1384, 1385, and 1386 each coordinate ADP. Ser1482 contributes to the ATP binding site.

The protein belongs to the ABC transporter superfamily. ABCC family. Conjugate transporter (TC 3.A.1.208) subfamily. In terms of assembly, forms an heterooctamer with KCNJ11; four ABCC8/SUR1 molecules interact with one KCNJ11 homotetramer.

The protein resides in the cell membrane. Its activity is regulated as follows. KATP channels are regulated by cytoplasmic ATP/ADP ratios; ATP inhibits the channel by closing the pore, while ADP activates the channel. Activated by phosphatidylinositol 4,5-biphosphate (PtdIns(4,5)P2). Functionally, regulator subunit of pancreatic ATP-sensitive potassium channel (KATP), playing a major role in the regulation of insulin release. In pancreatic cells, it forms KATP channels with KCNJ11; KCNJ11 forms the channel pore while ABCC8 is required for activation and regulation. In Homo sapiens (Human), this protein is ATP-binding cassette sub-family C member 8 (ABCC8).